A 312-amino-acid polypeptide reads, in one-letter code: Pantothenate kinase (312 aa).

92–99 (GSVAVGKS) contacts ATP.

It belongs to the prokaryotic pantothenate kinase family.

It localises to the cytoplasm. It carries out the reaction (R)-pantothenate + ATP = (R)-4'-phosphopantothenate + ADP + H(+). It functions in the pathway cofactor biosynthesis; coenzyme A biosynthesis; CoA from (R)-pantothenate: step 1/5. In Vibrio cholerae serotype O1 (strain ATCC 39315 / El Tor Inaba N16961), this protein is Pantothenate kinase (coaA).